A 446-amino-acid chain; its full sequence is Tryptophan dimethylallyltransferase (446 aa).

L-tryptophan contacts are provided by residues 83 to 84 and Glu92; that span reads IL. Substrate-binding residues include Arg103, Lys189, and Tyr191. 2 residues coordinate L-tryptophan: Tyr193 and Arg246. The substrate site is built by Arg259, Lys261, Tyr263, Gln345, and Tyr347.

It belongs to the tryptophan dimethylallyltransferase family. In terms of assembly, homodimer.

It carries out the reaction L-tryptophan + dimethylallyl diphosphate = 4-(3-methylbut-2-enyl)-L-tryptophan + diphosphate. The protein operates within alkaloid biosynthesis; ergot alkaloid biosynthesis. In terms of biological role, tryptophan dimethylallyltransferase; part of the gene cluster that mediates the biosynthesis of fungal ergot alkaloid. DmaW catalyzes the first step of ergot alkaloid biosynthesis by condensing dimethylallyl diphosphate (DMAP) and tryptophan to form 4-dimethylallyl-L-tryptophan. The second step is catalyzed by the methyltransferase easF that methylates 4-dimethylallyl-L-tryptophan in the presence of S-adenosyl-L-methionine, resulting in the formation of 4-dimethylallyl-L-abrine. The catalase easC and the FAD-dependent oxidoreductase easE then transform 4-dimethylallyl-L-abrine to chanoclavine-I which is further oxidized by easD in the presence of NAD(+), resulting in the formation of chanoclavine-I aldehyde. Chanoclavine-I aldehyde is the precursor of ergoamides and ergopeptines in Clavicipitaceae, and clavine-type alcaloids such as fumiclavine in Trichocomaceae. However, the metabolites downstream of chanoclavine-I aldehyde in Arthrodermataceae have not been identified yet. The polypeptide is Tryptophan dimethylallyltransferase (Arthroderma otae (strain ATCC MYA-4605 / CBS 113480) (Microsporum canis)).